The chain runs to 359 residues: UPF0283 membrane protein RL2646 (359 aa).

Residues 1 to 48 form a disordered region; it reads MSKPPSDPPRRAPAAFIYEDEATERRDNGRQGGERRKPESFSEHIVVT. The span at 23 to 42 shows a compositional bias: basic and acidic residues; sequence TERRDNGRQGGERRKPESFS. Helical transmembrane passes span 77-97 and 111-131; these read FGKIAAGAFGILLSLAIGLWT and LGYAALAVLAVGILAVLALVI.

The protein belongs to the UPF0283 family.

It localises to the cell inner membrane. The protein is UPF0283 membrane protein RL2646 of Rhizobium johnstonii (strain DSM 114642 / LMG 32736 / 3841) (Rhizobium leguminosarum bv. viciae).